We begin with the raw amino-acid sequence, 417 residues long: Alpha-galactosidase (417 aa).

The signal sequence occupies residues 1–55 (MARASSSSSPPSPRLLLLLLVAVAATLLPEAAALGNFTAESRGARWRSRRARRRA). Residues Trp-71, Asp-106, Asp-107, Cys-156, Lys-183, Asp-185, Trp-219, Arg-236, and Asp-240 each coordinate alpha-D-galactose. Cystine bridges form between Cys-76–Cys-108 and Cys-156–Cys-187. Asp-185 serves as the catalytic Nucleophile. Asp-240 (proton donor) is an active-site residue.

Belongs to the glycosyl hydrolase 27 family.

It catalyses the reaction Hydrolysis of terminal, non-reducing alpha-D-galactose residues in alpha-D-galactosides, including galactose oligosaccharides, galactomannans and galactolipids.. It carries out the reaction melibiose + H2O = D-galactose + D-glucose. The enzyme catalyses raffinose + H2O = sucrose + D-galactose. The catalysed reaction is stachyose + H2O = raffinose + D-galactose. It catalyses the reaction alpha-D-Gal-(1-&gt;6)-beta-D-Man-(1-&gt;4)-beta-D-Man-(1-&gt;4)-D-Man + H2O = beta-D-Man-(1-&gt;4)-beta-D-Man-(1-&gt;4)-D-Man + D-galactose. It carries out the reaction beta-D-Man-(1-&gt;4)-[alpha-D-Gal-(1-&gt;6)]-beta-D-Man-(1-&gt;4)-beta-D-Man-(1-&gt;4)-D-Man + H2O = beta-D-Man-(1-&gt;4)-beta-D-Man-(1-&gt;4)-beta-D-Man-(1-&gt;4)-D-Man + D-galactose. Its activity is regulated as follows. 1 mM Hg(2+) and Ag(2+) decrease activity by 98% and 96%, respectively. 1 mM Para-chloromercuribenzoic acid (PCMB) completely inhibits enzymatic activity. In terms of biological role, hydrolyzes melibiose, raffinose and stachyose in the following decreasing order of reactivity: raffinose, melibiose, stachyose. Acts on both the terminal alpha-galactosyl residue and the side-chain alpha-galactosyl residue of the galactomanno-oligosaccharides. This Oryza sativa subsp. japonica (Rice) protein is Alpha-galactosidase.